A 361-amino-acid polypeptide reads, in one-letter code: tRNA(Ile)-lysidine synthase (361 aa).

32 to 37 (SGGPDS) contributes to the ATP binding site.

The protein belongs to the tRNA(Ile)-lysidine synthase family.

The protein resides in the cytoplasm. The enzyme catalyses cytidine(34) in tRNA(Ile2) + L-lysine + ATP = lysidine(34) in tRNA(Ile2) + AMP + diphosphate + H(+). In terms of biological role, ligates lysine onto the cytidine present at position 34 of the AUA codon-specific tRNA(Ile) that contains the anticodon CAU, in an ATP-dependent manner. Cytidine is converted to lysidine, thus changing the amino acid specificity of the tRNA from methionine to isoleucine. The polypeptide is tRNA(Ile)-lysidine synthase (Bradyrhizobium diazoefficiens (strain JCM 10833 / BCRC 13528 / IAM 13628 / NBRC 14792 / USDA 110)).